We begin with the raw amino-acid sequence, 650 residues long: Phosphomethylpyrimidine synthase (650 aa).

Substrate is bound by residues N241, M270, Y299, H335, 355–357, 396–399, and E435; these read SRG and DGLR. H439 provides a ligand contact to Zn(2+). Y462 serves as a coordination point for substrate. H503 is a binding site for Zn(2+). The [4Fe-4S] cluster site is built by C583, C586, and C591.

This sequence belongs to the ThiC family. In terms of assembly, homodimer. The cofactor is [4Fe-4S] cluster.

It carries out the reaction 5-amino-1-(5-phospho-beta-D-ribosyl)imidazole + S-adenosyl-L-methionine = 4-amino-2-methyl-5-(phosphooxymethyl)pyrimidine + CO + 5'-deoxyadenosine + formate + L-methionine + 3 H(+). The protein operates within cofactor biosynthesis; thiamine diphosphate biosynthesis. In terms of biological role, catalyzes the synthesis of the hydroxymethylpyrimidine phosphate (HMP-P) moiety of thiamine from aminoimidazole ribotide (AIR) in a radical S-adenosyl-L-methionine (SAM)-dependent reaction. The polypeptide is Phosphomethylpyrimidine synthase (Pseudoalteromonas translucida (strain TAC 125)).